A 223-amino-acid polypeptide reads, in one-letter code: MIGRIAGVILHRAQDHVLIDVRGVGYIVHVSERTAANLPPAGQATALYTELLVREDLLQLFGFPTLLEKEWHRLLTSVQGVGAKVALAILGTLGPDGLSRALALGDWSALRKAPGVGPKLAQRVVMELKDKAPAVMALGGALTVDPGPLPEVELVEAAVPAPVPAKAAPSSAQATADALSALGNLGYAPSEAASAVAEAAAREPAAPTAALIRAALRLLAPKE.

The tract at residues 1-64 is domain I; that stretch reads MIGRIAGVIL…EDLLQLFGFP (64 aa). The domain II stretch occupies residues 65 to 143; that stretch reads TLLEKEWHRL…AVMALGGALT (79 aa). Residues 144–169 are flexible linker; sequence VDPGPLPEVELVEAAVPAPVPAKAAP. A domain III region spans residues 170–223; that stretch reads SSAQATADALSALGNLGYAPSEAASAVAEAAAREPAAPTAALIRAALRLLAPKE.

This sequence belongs to the RuvA family. Homotetramer. Forms an RuvA(8)-RuvB(12)-Holliday junction (HJ) complex. HJ DNA is sandwiched between 2 RuvA tetramers; dsDNA enters through RuvA and exits via RuvB. An RuvB hexamer assembles on each DNA strand where it exits the tetramer. Each RuvB hexamer is contacted by two RuvA subunits (via domain III) on 2 adjacent RuvB subunits; this complex drives branch migration. In the full resolvosome a probable DNA-RuvA(4)-RuvB(12)-RuvC(2) complex forms which resolves the HJ.

The protein localises to the cytoplasm. Its function is as follows. The RuvA-RuvB-RuvC complex processes Holliday junction (HJ) DNA during genetic recombination and DNA repair, while the RuvA-RuvB complex plays an important role in the rescue of blocked DNA replication forks via replication fork reversal (RFR). RuvA specifically binds to HJ cruciform DNA, conferring on it an open structure. The RuvB hexamer acts as an ATP-dependent pump, pulling dsDNA into and through the RuvAB complex. HJ branch migration allows RuvC to scan DNA until it finds its consensus sequence, where it cleaves and resolves the cruciform DNA. This is Holliday junction branch migration complex subunit RuvA from Paracoccus denitrificans (strain Pd 1222).